Reading from the N-terminus, the 1346-residue chain is Adhesion G protein-coupled receptor A3 (1346 aa).

The signal sequence occupies residues 1-21; it reads MSVLCVLLLAFVLPLRGSSSA. Residues 18–45 are disordered; sequence SSSAGSTECKTYDERSRSAGKSSPSGAT. Over 22 to 739 the chain is Extracellular; that stretch reads GSTECKTYDE…NVFIFRPLHP (718 aa). 4 LRR repeats span residues 66–90, 91–114, 116–138, and 139–162; these read FPNR…SFVG, LSSL…AFYG, FSLK…VFKG, and LTNL…IFDS. Residues 176–223 form the LRRCT domain; that stretch reads LLCDCNLQWLVVWIKEKAIGVKETRCSFPRSLQGQLITTLRAETLTCD. The 99-residue stretch at 229–327 folds into the Ig-like domain; sequence PSFQMTPSQH…GNNTRTVHIV (99 aa). An intrachain disulfide couples Cys251 to Cys311. LRR repeat units lie at residues 503–529, 574–600, and 611–632; these read LQRI…ALEA, TSNL…LFSS, and VYKL…GNSS. Positions 563–728 constitute a GAIN-B domain; it reads PERQLSFKCN…AVLMDLNRTG (166 aa). A GPS region spans residues 679-728; that stretch reads PAFWNFSLQGGQGGWQSDGCRILHQDDNFTTVSCHSLNSYAVLMDLNRTG. Cysteines 698 and 712 form a disulfide. A helical transmembrane segment spans residues 740 to 760; that stretch reads VIYSTALVLVLCLLSVIVSYI. Residues 761-773 are Cytoplasmic-facing; that stretch reads YHHKSVRISKKCW. Residues 774–794 form a helical membrane-spanning segment; it reads HMLVNLCLHILLTCAVFVGGI. Over 795–804 the chain is Extracellular; sequence NQTYNASVCQ. Residues 805–825 form a helical membrane-spanning segment; sequence AMGIVLHYSTLATALWSGVTA. Over 826–854 the chain is Cytoplasmic; it reads RNIYKQVTRKAKRYEELDEPPPPPRPMLR. Residues 855–875 form a helical membrane-spanning segment; sequence FYLIGGGIPIIVCGITAAANI. The Extracellular portion of the chain corresponds to 876-897; sequence KNYGSQVNAPYCWMAWEPSLGA. Residues 898 to 918 traverse the membrane as a helical segment; that stretch reads FYGPAAFIVFVDCMYFLSILI. The Cytoplasmic segment spans residues 919–977; it reads QLRRHPERRFELKEQSEEQQHLSVTEATEITPVHLESSPTAQPVPMSALENEHTFVSQL. Residues 978-998 traverse the membrane as a helical segment; that stretch reads MGVAGSLTLYAALWVFGALAI. Residues 999 to 1005 lie on the Extracellular side of the membrane; it reads SQEHPAD. Residues 1006 to 1026 form a helical membrane-spanning segment; sequence LVFACLFGALALGLGAFLVAH. Residues 1027-1346 are Cytoplasmic-facing; that stretch reads HCVNRQDMRR…TGLWKHETTV (320 aa). Positions 1157 to 1169 are enriched in polar residues; the sequence is SVNNNNLPGNANI. Disordered regions lie at residues 1157–1188 and 1202–1284; these read SVNN…RASR and SVEG…DGSE. Basic residues-rich tracts occupy residues 1173–1187 and 1212–1226; these read PGRH…HRAS and NKRH…RNSR. Low complexity predominate over residues 1238–1252; it reads QSQLQQDSSDAASTS. Positions 1266 to 1280 are enriched in gly residues; that stretch reads IGNGFGHGISNGGLL. Positions 1344 to 1346 match the PDZ-binding motif; it reads TTV.

This sequence belongs to the G-protein coupled receptor 2 family. Adhesion G-protein coupled receptor (ADGR) subfamily. As to quaternary structure, interacts (via PDZ-binding motif) with disheveled proteins; leading to the localization of dishevelled proteins to specific membrane subdomains. As to expression, ubiquitously expressed at very low levels.

Its subcellular location is the cell membrane. Orphan receptor that acts as a critical modulator of planar cell polarity during gastrulation. Controls the localization of dishevelled. This Danio rerio (Zebrafish) protein is Adhesion G protein-coupled receptor A3 (adgra3).